Consider the following 116-residue polypeptide: Vesicle-associated membrane protein 2 (116 aa).

The disordered stretch occupies residues 1–28; that stretch reads MSATAATVPPAAPAGEGGPPAPPPNLTS. Position 2 is an N-acetylserine (Ser2). Residues 2–94 are Cytoplasmic-facing; that stretch reads SATAATVPPA…KRKYWWKNLK (93 aa). The region spanning 31-91 is the v-SNARE coiled-coil homology domain; that stretch reads RLQQTQAQVD…AKLKRKYWWK (61 aa). A required for interaction with SEPT8 region spans residues 92-116; that stretch reads NLKMMIILGVICAIILIIIIVYFST. A helical; Anchor for type IV membrane protein membrane pass occupies residues 95 to 114; it reads MMIILGVICAIILIIIIVYF. Over 115–116 the chain is Vesicular; that stretch reads ST.

The protein belongs to the synaptobrevin family. Part of the SNARE core complex containing SNAP25, VAMP2 and STX1A; this complex constitutes the basic catalytic machinery of the complex neurotransmitter release apparatus. Recruited to the SNARE complex following binding of the SNARE complex component STX1A to STXBP1. This complex binds to CPLX1. Interacts with VAPA and VAPB. Interacts (via N-terminus) with KCNB1 (via N-terminus and C-terminus); stimulates the channel inactivation rate of KCNB1. Interacts with POPDC1 and STX4. Interacts with WDFY2, PRKCZ and PRKCI. Forms a complex with WDFY2 and PRKCZ. Interacts with SEPT8; the interaction inhibits interaction of VAMP2 with SYP. Interacts with SYP; the interaction is inhibited by interaction with SEPT8. Interacts with PICALM. Interacts with alpha-synuclein/SNCA. Interacts with STX3 isoform 3B. In terms of processing, phosphorylated by PRKCZ in vitro and this phosphorylation is increased in the presence of WDFY2. (Microbial infection) Targeted and hydrolyzed by C.botulinum neurotoxin type B (BoNT/B, botB); 20 hours after treatment of spinal cord cells almost all the protein has been digested. BoNT/B hydrolyzes the 76-Gln-|-Phe-77 bond and inhibits neurotransmitter release. Post-translationally, (Microbial infection) Targeted and hydrolyzed by C.tetani toxin (tetX); 20 hours after treatment of spinal cord cells almost all the protein has been digested. Tetanus toxin hydrolyzes the 76-Gln-|-Phe-77 bond and inhibits neurotransmitter release. Expressed in the outer plexiform layer of the retina (at protein level).

The protein resides in the cytoplasmic vesicle. It localises to the secretory vesicle. Its subcellular location is the synaptic vesicle membrane. It is found in the cell membrane. In terms of biological role, involved in the targeting and/or fusion of transport vesicles to their target membrane. Major SNARE protein of synaptic vesicles which mediates fusion of synaptic vesicles to release neurotransmitters. Essential for fast vesicular exocytosis and activity-dependent neurotransmitter release as well as fast endocytosis that mediates rapid reuse of synaptic vesicles. Modulates the gating characteristics of the delayed rectifier voltage-dependent potassium channel KCNB1. This Mus musculus (Mouse) protein is Vesicle-associated membrane protein 2 (Vamp2).